We begin with the raw amino-acid sequence, 299 residues long: Hydrogenase maturation factor HypB (299 aa).

Residues C2, C5, and C7 each coordinate Ni(2+). The segment at 18-57 is disordered; the sequence is EVGDDGHGHHHHDGHHDHDHDHDHHRGDHEHDDHHHAEDG. Residues 31–57 show a composition bias toward basic and acidic residues; the sequence is GHHDHDHDHDHHRGDHEHDDHHHAEDG. The interval 107 to 268 is G-domain; the sequence is ALNFVSSPGS…LRVNPRLQTL (162 aa). 3 residues coordinate Ni(2+): C167, H168, and C199. Positions 167, 168, and 199 each coordinate Zn(2+).

This sequence belongs to the SIMIBI class G3E GTPase family. HypB/HupM subfamily.

Its function is as follows. Involved in the maturation of [NiFe] hydrogenases. Required for nickel insertion into the metal center of the hydrogenase. Exhibits a low intrinsic GTPase activity, which is essential for nickel insertion. Is able to bind 4 nickel ions per subunit. Can also bind zinc. The sequence is that of Hydrogenase maturation factor HypB from Rhizobium leguminosarum bv. viciae.